The following is a 213-amino-acid chain: Uridine kinase (213 aa).

15 to 22 (GASASGKS) lines the ATP pocket.

The protein belongs to the uridine kinase family.

It localises to the cytoplasm. The catalysed reaction is uridine + ATP = UMP + ADP + H(+). It carries out the reaction cytidine + ATP = CMP + ADP + H(+). It participates in pyrimidine metabolism; CTP biosynthesis via salvage pathway; CTP from cytidine: step 1/3. Its pathway is pyrimidine metabolism; UMP biosynthesis via salvage pathway; UMP from uridine: step 1/1. The chain is Uridine kinase from Serratia proteamaculans (strain 568).